The primary structure comprises 328 residues: Spermatogenesis- and oogenesis-specific basic helix-loop-helix-containing protein 1 (328 aa).

The region spanning 53–104 is the bHLH domain; it reads SCLRRNVISERERRKRMSLSCERLRALLPQFDGRREDMASVLEMSVQFLRLA. A disordered region spans residues 290 to 328; sequence EAGSALGSDVDDGTSFLLTAGPSSWPGEWGPGFRAGPPA. Residues 310 to 321 show a composition bias toward low complexity; sequence GPSSWPGEWGPG.

Forms both hetero- and homodimers with SOHLH2.

It localises to the cytoplasm. The protein resides in the nucleus. Its function is as follows. Transcription regulator of both male and female germline differentiation. Suppresses genes involved in spermatogonial stem cells maintenance, and induces genes important for spermatogonial differentiation. Coordinates oocyte differentiation without affecting meiosis I. The sequence is that of Spermatogenesis- and oogenesis-specific basic helix-loop-helix-containing protein 1 (SOHLH1) from Homo sapiens (Human).